The following is a 239-amino-acid chain: Large ribosomal subunit protein uL2 (239 aa).

Disordered stretches follow at residues 1-28 and 199-239; these read MGKR…VGPA and SHPH…RRKG. Basic residues predominate over residues 225–239; it reads KVGHIAARRTGRRKG.

Belongs to the universal ribosomal protein uL2 family. Part of the 50S ribosomal subunit. Forms a bridge to the 30S subunit in the 70S ribosome.

In terms of biological role, one of the primary rRNA binding proteins. Required for association of the 30S and 50S subunits to form the 70S ribosome, for tRNA binding and peptide bond formation. It has been suggested to have peptidyltransferase activity; this is somewhat controversial. Makes several contacts with the 16S rRNA in the 70S ribosome. This is Large ribosomal subunit protein uL2 from Staphylothermus marinus (strain ATCC 43588 / DSM 3639 / JCM 9404 / F1).